A 141-amino-acid chain; its full sequence is 3-hydroxyacyl-[acyl-carrier-protein] dehydratase FabZ (141 aa).

H48 is an active-site residue.

This sequence belongs to the thioester dehydratase family. FabZ subfamily.

It is found in the cytoplasm. It carries out the reaction a (3R)-hydroxyacyl-[ACP] = a (2E)-enoyl-[ACP] + H2O. In terms of biological role, involved in unsaturated fatty acids biosynthesis. Catalyzes the dehydration of short chain beta-hydroxyacyl-ACPs and long chain saturated and unsaturated beta-hydroxyacyl-ACPs. The protein is 3-hydroxyacyl-[acyl-carrier-protein] dehydratase FabZ of Bacillus velezensis (strain DSM 23117 / BGSC 10A6 / LMG 26770 / FZB42) (Bacillus amyloliquefaciens subsp. plantarum).